A 154-amino-acid polypeptide reads, in one-letter code: Probable prefoldin subunit 5 (154 aa).

The protein belongs to the prefoldin subunit alpha family. In terms of assembly, heterohexamer of two PFD-alpha type and four PFD-beta type subunits. Interacts with byr1.

The protein localises to the cytoplasm. Its function is as follows. Binds specifically to cytosolic chaperonin (c-CPN) and transfers target proteins to it. Binds to nascent polypeptide chain and promotes folding in an environment in which there are many competing pathways for nonnative proteins. Required for normal cytoskeletal function and when bound to byr1, is involved in the regulation of sexual differentiation. This Schizosaccharomyces pombe (strain 972 / ATCC 24843) (Fission yeast) protein is Probable prefoldin subunit 5 (bob1).